A 156-amino-acid chain; its full sequence is MAVKIRLKRFGKIRAPFYRVVVMDSRTRRDGRAIEEIGKYHPTEEPSFIEIDSERAQYWLSVGAQPTEQVAALLKITGDWQKFKGESGAEGTLKSKSEKEAFVAPERDSVILPEEPKQEEAPAESEQPAEAPAEEAAEAPAEEAAEAPAEDAEKSE.

Residues 85 to 120 (GESGAEGTLKSKSEKEAFVAPERDSVILPEEPKQEE) show a composition bias toward basic and acidic residues. Residues 85-156 (GESGAEGTLK…APAEDAEKSE (72 aa)) form a disordered region. Positions 132–150 (PAEEAAEAPAEEAAEAPAE) are enriched in acidic residues.

It belongs to the bacterial ribosomal protein bS16 family.

This chain is Small ribosomal subunit protein bS16, found in Micrococcus luteus (strain ATCC 4698 / DSM 20030 / JCM 1464 / CCM 169 / CCUG 5858 / IAM 1056 / NBRC 3333 / NCIMB 9278 / NCTC 2665 / VKM Ac-2230) (Micrococcus lysodeikticus).